We begin with the raw amino-acid sequence, 351 residues long: Deoxyuridylate hydroxymethyltransferase (351 aa).

The protein belongs to the thymidylate synthase family.

The enzyme catalyses dUMP + (6R)-5,10-methylene-5,6,7,8-tetrahydrofolate + H2O = 5-hydroxymethyl-dUMP + (6S)-5,6,7,8-tetrahydrofolate. Its function is as follows. Catalyzes formation of 5-hydroxymethyldeoxyuridylate (5HMdUMP) as a step in the pathway that replaces dTMP by thymidine hypermodifications in the viral genome. As a final result of the pathway of hypermodification, 5-aminoethyl-2'-deoxyuridine (5-NedU) substitutes for about 30% of thymidines in the viral DNA. These modifications probably prevent degradation of viral genome by the host restriction-modification antiviral defense system. In Pseudomonas aeruginosa, this protein is Deoxyuridylate hydroxymethyltransferase.